The sequence spans 400 residues: Tryptophan synthase beta chain (400 aa).

The residue at position 90 (Lys-90) is an N6-(pyridoxal phosphate)lysine.

It belongs to the TrpB family. As to quaternary structure, tetramer of two alpha and two beta chains. Requires pyridoxal 5'-phosphate as cofactor.

It carries out the reaction (1S,2R)-1-C-(indol-3-yl)glycerol 3-phosphate + L-serine = D-glyceraldehyde 3-phosphate + L-tryptophan + H2O. The protein operates within amino-acid biosynthesis; L-tryptophan biosynthesis; L-tryptophan from chorismate: step 5/5. In terms of biological role, the beta subunit is responsible for the synthesis of L-tryptophan from indole and L-serine. The sequence is that of Tryptophan synthase beta chain (trpB) from Bacillus subtilis (strain 168).